Reading from the N-terminus, the 231-residue chain is 7-cyano-7-deazaguanine synthase (231 aa).

8–18 (FSGGQDSTTCL) contacts ATP. Zn(2+) contacts are provided by Cys188, Cys197, Cys200, and Cys203.

It belongs to the QueC family. Requires Zn(2+) as cofactor.

The enzyme catalyses 7-carboxy-7-deazaguanine + NH4(+) + ATP = 7-cyano-7-deazaguanine + ADP + phosphate + H2O + H(+). Its pathway is purine metabolism; 7-cyano-7-deazaguanine biosynthesis. Its function is as follows. Catalyzes the ATP-dependent conversion of 7-carboxy-7-deazaguanine (CDG) to 7-cyano-7-deazaguanine (preQ(0)). The protein is 7-cyano-7-deazaguanine synthase of Salmonella newport (strain SL254).